The chain runs to 283 residues: tRNA dimethylallyltransferase (283 aa).

An interaction with substrate tRNA region spans residues D5–L8.

This sequence belongs to the IPP transferase family. As to quaternary structure, monomer. Mg(2+) serves as cofactor.

The enzyme catalyses adenosine(37) in tRNA + dimethylallyl diphosphate = N(6)-dimethylallyladenosine(37) in tRNA + diphosphate. Catalyzes the transfer of a dimethylallyl group onto the adenine at position 37 in tRNAs that read codons beginning with uridine, leading to the formation of N6-(dimethylallyl)adenosine (i(6)A). The protein is tRNA dimethylallyltransferase of Desulforamulus reducens (strain ATCC BAA-1160 / DSM 100696 / MI-1) (Desulfotomaculum reducens).